Here is a 315-residue protein sequence, read N- to C-terminus: DNA-directed RNA polymerase subunit alpha (315 aa).

The segment at 1–228 is alpha N-terminal domain (alpha-NTD); it reads MLEIEKPKIE…EHFKLFMTLT (228 aa). The segment at 245–315 is alpha C-terminal domain (alpha-CTD); it reads KEKVLEMAIE…LGLSLKQNED (71 aa).

Belongs to the RNA polymerase alpha chain family. Homodimer. The RNAP catalytic core consists of 2 alpha, 1 beta, 1 beta' and 1 omega subunit. When a sigma factor is associated with the core the holoenzyme is formed, which can initiate transcription.

It catalyses the reaction RNA(n) + a ribonucleoside 5'-triphosphate = RNA(n+1) + diphosphate. DNA-dependent RNA polymerase catalyzes the transcription of DNA into RNA using the four ribonucleoside triphosphates as substrates. In Clostridium kluyveri (strain NBRC 12016), this protein is DNA-directed RNA polymerase subunit alpha.